The primary structure comprises 401 residues: Renin-2 (401 aa).

The N-terminal stretch at 1–25 (MDRRRMPLWALLLLWSPCTFSLPTG) is a signal peptide. The propeptide at 26-63 (TTFERIPLKKMPSVREILEERGVDMTRLSAEWDVFTKR) is activation peptide. Positions 83 to 398 (YYGEIGIGTP…DRHNNRIGFA (316 aa)) constitute a Peptidase A1 domain. Asp-101 is a catalytic residue. Cystine bridges form between Cys-114-Cys-121 and Cys-277-Cys-281. The active site involves Asp-286. A disulfide bond links Cys-320 and Cys-357.

It belongs to the peptidase A1 family. Dimer of a heavy chain and a light chain joined by a disulfide bond. As to expression, submandibular gland.

It is found in the secreted. The enzyme catalyses Cleavage of Leu-|-Xaa bond in angiotensinogen to generate angiotensin I.. Its function is as follows. Renin is a highly specific endopeptidase, related to pepsin, whose only known function is to generate angiotensin I from angiotensinogen in the plasma, initiating a cascade of reactions that produce an elevation of blood pressure and increased sodium retention by the kidney. The polypeptide is Renin-2 (Mus musculus (Mouse)).